Consider the following 325-residue polypeptide: Large ribosomal subunit protein uL18 (325 aa).

The disordered stretch occupies residues 247–300 (IRIPPSRRNPRRRSPRSGGRWPSCRSPPARRRSRSTRPTSWPRSRPTSKPKRPR). Low complexity-rich tracts occupy residues 262-273 (RSGGRWPSCRSP) and 282-291 (TRPTSWPRSR).

Belongs to the universal ribosomal protein uL18 family. As to quaternary structure, component of the large ribosomal subunit (LSU).

The protein resides in the cytoplasm. It localises to the nucleus. Its function is as follows. Component of the ribosome, a large ribonucleoprotein complex responsible for the synthesis of proteins in the cell. The small ribosomal subunit (SSU) binds messenger RNAs (mRNAs) and translates the encoded message by selecting cognate aminoacyl-transfer RNA (tRNA) molecules. The large subunit (LSU) contains the ribosomal catalytic site termed the peptidyl transferase center (PTC), which catalyzes the formation of peptide bonds, thereby polymerizing the amino acids delivered by tRNAs into a polypeptide chain. The nascent polypeptides leave the ribosome through a tunnel in the LSU and interact with protein factors that function in enzymatic processing, targeting, and the membrane insertion of nascent chains at the exit of the ribosomal tunnel. In Anopheles gambiae (African malaria mosquito), this protein is Large ribosomal subunit protein uL18 (RpL5).